The primary structure comprises 116 residues: UPF0102 protein Neut_1662 (116 aa).

This sequence belongs to the UPF0102 family.

This chain is UPF0102 protein Neut_1662, found in Nitrosomonas eutropha (strain DSM 101675 / C91 / Nm57).